Reading from the N-terminus, the 252-residue chain is MIKKRVIPCLDVKDGRVVKGIQFQSLRDIGNPVDLALYYNEAGADELVFLDISKTEAGHDLMIEVIEATAKQLFIPLTVGGGIQNLDDITQLLNHGADKISLNSSALKHPELIRQASEKFGRQCICIAIDSFYDKDREDYFCTTHGGKKLTDVSVYDWVQEVEHLGAGELLITSMHHDGMKQGFDIEHLAKIKQLVNIPIIASGGGGNAQHFVELFQQTDVSAGLAASILHDQETTVAEIKDKMREGGILVR.

Residues aspartate 11 and aspartate 130 contribute to the active site.

This sequence belongs to the HisA/HisF family. Heterodimer of HisH and HisF.

The protein resides in the cytoplasm. The catalysed reaction is 5-[(5-phospho-1-deoxy-D-ribulos-1-ylimino)methylamino]-1-(5-phospho-beta-D-ribosyl)imidazole-4-carboxamide + L-glutamine = D-erythro-1-(imidazol-4-yl)glycerol 3-phosphate + 5-amino-1-(5-phospho-beta-D-ribosyl)imidazole-4-carboxamide + L-glutamate + H(+). It participates in amino-acid biosynthesis; L-histidine biosynthesis; L-histidine from 5-phospho-alpha-D-ribose 1-diphosphate: step 5/9. In terms of biological role, IGPS catalyzes the conversion of PRFAR and glutamine to IGP, AICAR and glutamate. The HisF subunit catalyzes the cyclization activity that produces IGP and AICAR from PRFAR using the ammonia provided by the HisH subunit. This chain is Imidazole glycerol phosphate synthase subunit HisF, found in Staphylococcus epidermidis (strain ATCC 35984 / DSM 28319 / BCRC 17069 / CCUG 31568 / BM 3577 / RP62A).